We begin with the raw amino-acid sequence, 224 residues long: Peroxiredoxin-6 (224 aa).

Positions 5 to 169 constitute a Thioredoxin domain; that stretch reads LLLGDVAPNF…ILRVVISLQL (165 aa). Positions 31-40 are required and sufficient for targeting to lysosomes and lamellar bodies; sequence DSWGILFSHP. At T44 the chain carries Phosphothreonine. The Cysteine sulfenic acid (-SOH) intermediate; for peroxidase activity role is filled by C47. K63 is subject to N6-acetyllysine. Y89 carries the phosphotyrosine modification. D140 functions as the For phospholipase activity in the catalytic mechanism. T177 carries the phosphothreonine; by MAPK modification. N6-acetyllysine; alternate is present on K209. K209 carries the post-translational modification N6-succinyllysine; alternate.

Belongs to the peroxiredoxin family. Prx6 subfamily. In terms of assembly, homodimer. Interacts with GSTP1; mediates PRDX6 glutathionylation and regeneration. Interacts with APEX1. Interacts with STH. May interact with FAM168B. May interact with HTR2A. In terms of processing, irreversibly inactivated by overoxidation of Cys-47 to sulfinic acid (Cys-SO(2)H) and sulfonic acid (Cys-SO(3)H) forms upon oxidative stress. Post-translationally, phosphorylation at Thr-177 by MAP kinases increases the phospholipase activity of the enzyme. The phosphorylated form exhibits a greater lysophosphatidylcholine acyltransferase activity compared to the non-phosphorylated form.

Its subcellular location is the cytoplasm. It localises to the lysosome. It carries out the reaction a hydroperoxide + 2 glutathione = an alcohol + glutathione disulfide + H2O. The enzyme catalyses a 1,2-diacyl-sn-glycero-3-phosphocholine + H2O = a 1-acyl-sn-glycero-3-phosphocholine + a fatty acid + H(+). It catalyses the reaction a 1-acyl-sn-glycero-3-phosphocholine + an acyl-CoA = a 1,2-diacyl-sn-glycero-3-phosphocholine + CoA. The catalysed reaction is 1-hexadecanoyl-sn-glycero-3-phosphocholine + hexadecanoyl-CoA = 1,2-dihexadecanoyl-sn-glycero-3-phosphocholine + CoA. It carries out the reaction 1,2-dihexadecanoyl-sn-glycero-3-phosphocholine + H2O = 1-hexadecanoyl-sn-glycero-3-phosphocholine + hexadecanoate + H(+). Its activity is regulated as follows. MJ33 or lithium;[(2R)-1-hexadecoxy-3-(2,2,2-trifluoroethoxy)propan-2-yl] methyl phosphate inhibits its phospholipase A2 activity. CI-976 or 2,2-Dimethyl-N-(2,4,6-trimethoxyphenyl)dodecanamide inhibits its lysophosphatidylcholine acyltransferase activity. Its function is as follows. Thiol-specific peroxidase that catalyzes the reduction of hydrogen peroxide and organic hydroperoxides to water and alcohols, respectively. Can reduce H(2)O(2) and short chain organic, fatty acid, and phospholipid hydroperoxides. Also has phospholipase activity, can therefore either reduce the oxidized sn-2 fatty acyl group of phospholipids (peroxidase activity) or hydrolyze the sn-2 ester bond of phospholipids (phospholipase activity). These activities are dependent on binding to phospholipids at acidic pH and to oxidized phospholipds at cytosolic pH. Plays a role in cell protection against oxidative stress by detoxifying peroxides and in phospholipid homeostasis. Exhibits acyl-CoA-dependent lysophospholipid acyltransferase which mediates the conversion of lysophosphatidylcholine (1-acyl-sn-glycero-3-phosphocholine or LPC) into phosphatidylcholine (1,2-diacyl-sn-glycero-3-phosphocholine or PC). Shows a clear preference for LPC as the lysophospholipid and for palmitoyl CoA as the fatty acyl substrate. In Homo sapiens (Human), this protein is Peroxiredoxin-6 (PRDX6).